The primary structure comprises 162 residues: Catabolic 3-dehydroquinase (162 aa).

The active-site Proton acceptor is tyrosine 24. Residues asparagine 88, histidine 94, and aspartate 101 each contribute to the substrate site. Histidine 114 serves as the catalytic Proton donor. Residues 115–116 and arginine 125 contribute to the substrate site; that span reads VS.

It belongs to the type-II 3-dehydroquinase family. In terms of assembly, homododecamer. Adopts a ring-like structure, composed of an arrangement of two hexameric rings stacked on top of one another.

It catalyses the reaction 3-dehydroquinate = 3-dehydroshikimate + H2O. It participates in aromatic compound metabolism; 3,4-dihydroxybenzoate biosynthesis; 3,4-dihydroxybenzoate from 3-dehydroquinate: step 1/2. Its function is as follows. Is involved in the catabolism of quinate. Allows the utilization of quinate as carbon source via the beta-ketoadipate pathway. This is Catabolic 3-dehydroquinase from Podospora anserina (strain S / ATCC MYA-4624 / DSM 980 / FGSC 10383) (Pleurage anserina).